We begin with the raw amino-acid sequence, 109 residues long: Large ribosomal subunit protein uL22 (109 aa).

This sequence belongs to the universal ribosomal protein uL22 family. As to quaternary structure, part of the 50S ribosomal subunit.

This protein binds specifically to 23S rRNA; its binding is stimulated by other ribosomal proteins, e.g. L4, L17, and L20. It is important during the early stages of 50S assembly. It makes multiple contacts with different domains of the 23S rRNA in the assembled 50S subunit and ribosome. In terms of biological role, the globular domain of the protein is located near the polypeptide exit tunnel on the outside of the subunit, while an extended beta-hairpin is found that lines the wall of the exit tunnel in the center of the 70S ribosome. The protein is Large ribosomal subunit protein uL22 of Aromatoleum aromaticum (strain DSM 19018 / LMG 30748 / EbN1) (Azoarcus sp. (strain EbN1)).